Here is a 345-residue protein sequence, read N- to C-terminus: Biotin synthase (345 aa).

The Radical SAM core domain maps to 66 to 291; that stretch reads PEVEVEGIIS…RTMLRFAGGR (226 aa). [4Fe-4S] cluster contacts are provided by C81, C85, and C88. 4 residues coordinate [2Fe-2S] cluster: C124, C157, C216, and R286.

The protein belongs to the radical SAM superfamily. Biotin synthase family. In terms of assembly, homodimer. [4Fe-4S] cluster is required as a cofactor. It depends on [2Fe-2S] cluster as a cofactor.

It carries out the reaction (4R,5S)-dethiobiotin + (sulfur carrier)-SH + 2 reduced [2Fe-2S]-[ferredoxin] + 2 S-adenosyl-L-methionine = (sulfur carrier)-H + biotin + 2 5'-deoxyadenosine + 2 L-methionine + 2 oxidized [2Fe-2S]-[ferredoxin]. Its pathway is cofactor biosynthesis; biotin biosynthesis; biotin from 7,8-diaminononanoate: step 2/2. Its function is as follows. Catalyzes the conversion of dethiobiotin (DTB) to biotin by the insertion of a sulfur atom into dethiobiotin via a radical-based mechanism. This Mycobacterium avium (strain 104) protein is Biotin synthase.